Here is a 944-residue protein sequence, read N- to C-terminus: MTVSGPGTPEPRPSDPGASSAEELRKEGNELFKCGDYEGALTAYTQALSLGATPQDQAILHRNRAACHLKLEDYSKAESEASKAIEKDGGDVKALYRRSQALEKLGRLDQAVLDLKRCVSLEPKNKVFQESLRNIGGQIQEKVRYMSSTDAKVEQMFQILLDPKEKGTEKKQKASQNLVVLAREDAGAEKIFRSNGVQLLQRLLDTGETDLMLAALRTLVGICSEHQSRTVATLSVLGTRRVVSILGVENQAVSLAACHLLQVMFDALKEGVKKGFRGKEGAIIVDPARELKVLISNLLELLTEIGVSGQGRDNALTLLIKMVPRKSPKDPNNSLTLWVIDQGLKKILEVGGSVPEAAGELTVTANSRMSASILLSKLFDDLKCDAERENFHRLCENYIRSWFEGQGLAGKLRAIQTVSCLLQGPCDAGNRALELSGVMESVIALCASEQEEEQLVAVEALIHAAGKAKRASFITANGVALLKDLYKGSERDSIRIRALVGLCKLGSAGGTDFSMKQFAEGSTLKLAKQCRKWLCNDQIDAGTRRWAVEGLAYLTFDADVKEEFVEDEAALKALFQLSRSEERSVLFAVGSALVNCTNSYDYEEPDPKMVELAKYAKQHVPEQHPKDKPSFVRARVKKLLAAGVVSAMTCMVKTESPVLTNSCRELLSRVFLALVEEVEDRGTVVAQGGGKALLPLALEGTDVGQTKAAQALAKLTITSNPEMTFPGERIYEVVRPLVSLLHLSCSGLQNFEALMALTNLAGISERLRQKILKEKAVPMIEGYMFEEHEMIRRAATECMCNLAMSKEVQDLFEAQGNDRLKLLVLYSGEDDELLRRAAAGGLAMLTSMRPSLCSRIPQVTTHWLEILQALLLSPNPELQHRGTVVVLNMMESSKEIASTLMESEVLEILSVLAKGEESPVTRAAAACLEKAVEYRLIQPNQDGE.

The segment at 1–25 (MTVSGPGTPEPRPSDPGASSAEELR) is disordered. TPR repeat units lie at residues 21-54 (AEEL…GATP), 58-91 (AILH…DGGD), and 92-125 (VKAL…EPKN). Lysine 70 bears the N6-acetyllysine mark. An N6-acetyllysine modification is found at lysine 483.

Interacts with PGR isoforms A and B as well as with NR3C1 in the absence of ligand, and with HSP90AB1. Binding to HSP90AB1 involves 2 UNC45A monomers per HSP90AB1 dimer.

Its subcellular location is the cytoplasm. It localises to the perinuclear region. It is found in the nucleus. In terms of biological role, may act as co-chaperone for HSP90 (Potential). Prevents the stimulation of HSP90AB1 ATPase activity by AHSA1. Positive factor in promoting PGR function in the cell. May be necessary for proper folding of myosin (Potential). Necessary for normal cell proliferation. Necessary for normal myotube formation and myosin accumulation during muscle cell development. May play a role in erythropoiesis in stroma cells in the spleen. This is Protein unc-45 homolog A (Unc45a) from Rattus norvegicus (Rat).